The primary structure comprises 376 residues: 1-acyl-sn-glycerol-3-phosphate acyltransferase gamma (376 aa).

The Cytoplasmic segment spans residues 1–124; the sequence is MGLLAFLKTQ…LGSSKVLAKK (124 aa). The HXXXXD motif signature appears at 96–101; that stretch reads HNFEID. Residues 125–145 traverse the membrane as a helical segment; it reads ELLYVPLIGWTWYFLEIVFCK. Topologically, residues 146–316 are lumenal; that stretch reads RKWEEDRDTV…TLLNFLSWAT (171 aa). The helical transmembrane segment at 317 to 339 threads the bilayer; the sequence is ILLSPLFSFVLGVFASGSPLLIL. Residues 340-376 lie on the Cytoplasmic side of the membrane; the sequence is TFLGFVGAASFGVRRLIGVTEIEKGSSYGNQEFKKKE.

The protein belongs to the 1-acyl-sn-glycerol-3-phosphate acyltransferase family.

Its subcellular location is the endoplasmic reticulum membrane. It localises to the nucleus envelope. The enzyme catalyses a 1-acyl-sn-glycero-3-phosphate + an acyl-CoA = a 1,2-diacyl-sn-glycero-3-phosphate + CoA. It catalyses the reaction pentadecanoyl-CoA + 1-(9Z-octadecenoyl)-sn-glycero-3-phosphate = 1-(9Z)-octadecenoyl-2-pentadecanoyl-sn-glycero-3-phosphate + CoA. The catalysed reaction is heptadecanoyl-CoA + 1-(9Z-octadecenoyl)-sn-glycero-3-phosphate = 1-(9Z)-octadecenoyl-2-heptadecanoyl-sn-glycero-3-phosphate + CoA. It carries out the reaction 1-(9Z-octadecenoyl)-sn-glycero-3-phosphate + octadecanoyl-CoA = 1-(9Z-octadecenoyl)-2-octadecanoyl-sn-glycero-3-phosphate + CoA. The enzyme catalyses nonadecanoyl-CoA + 1-(9Z-octadecenoyl)-sn-glycero-3-phosphate = 1-(9Z)-octadecenoyl-2-nonadecanoyl-sn-glycero-3-phosphate + CoA. It catalyses the reaction 1-(9Z-octadecenoyl)-sn-glycero-3-phosphate + (5Z,8Z,11Z,14Z)-eicosatetraenoyl-CoA = 1-(9Z)-octadecenoyl-2-(5Z,8Z,11Z,14Z)-eicosatetraenoyl-sn-glycero-3-phosphate + CoA. The catalysed reaction is 1-(9Z-octadecenoyl)-sn-glycero-3-phosphate + (9Z)-octadecenoyl-CoA = 1,2-di-(9Z-octadecenoyl)-sn-glycero-3-phosphate + CoA. It carries out the reaction 1-(9Z-octadecenoyl)-sn-glycero-3-phosphate + (9Z,12Z)-octadecadienoyl-CoA = 1-(9Z)-octadecenoyl-2-(9Z,12Z)-octadecadienoyl-sn-glycero-3-phosphate + CoA. The enzyme catalyses 1-(9Z-octadecenoyl)-sn-glycero-3-phosphocholine + (5Z,8Z,11Z,14Z)-eicosatetraenoyl-CoA = 1-(9Z)-octadecenoyl-2-(5Z,8Z,11Z,14Z)-icosatetraenoyl-sn-glycero-3-phosphocholine + CoA. It catalyses the reaction 1-(9Z-octadecenoyl)-sn-glycero-3-phospho-(1D-myo-inositol) + (5Z,8Z,11Z,14Z)-eicosatetraenoyl-CoA = 1-(9Z-octadecenoyl)-2-(5Z,8Z,11Z,14Z-eicosatetraenoyl)-sn-glycero-3-phospho-1D-myo-inositol + CoA. The catalysed reaction is 1-(9Z-octadecenoyl)-sn-glycero-3-phospho-L-serine + (5Z,8Z,11Z,14Z)-eicosatetraenoyl-CoA = 1-(9Z-octadecenoyl)-2-(5Z,8Z,11Z,14Z-eicosatetraenoyl)-sn-glycero-3-phospho-L-serine + CoA. It carries out the reaction 1-hexadecanoyl-sn-glycero-3-phosphate + (9Z)-octadecenoyl-CoA = 1-hexadecanoyl-2-(9Z-octadecenoyl)-sn-glycero-3-phosphate + CoA. The enzyme catalyses 1-hexadecanoyl-sn-glycero-3-phosphate + (5Z,8Z,11Z,14Z)-eicosatetraenoyl-CoA = 1-hexadecanoyl-2-(5Z,8Z,11Z,14Z-eicosatetraenoyl)-sn-glycero-3-phosphate + CoA. It catalyses the reaction 1-heptadecanoyl-sn-glycero-3-phosphate + (5Z,8Z,11Z,14Z)-eicosatetraenoyl-CoA = 1-heptadecanoyl-2-(5Z,8Z,11Z,14Z)-eicosatetraenoyl-sn-glycero-3-phosphate + CoA. The catalysed reaction is 1-octadecanoyl-sn-glycero-3-phosphate + (9Z)-octadecenoyl-CoA = 1-octadecanoyl-2-(9Z-octadecenoyl)-sn-glycero-3-phosphate + CoA. It carries out the reaction 1-octadecanoyl-sn-glycero-3-phosphate + (5Z,8Z,11Z,14Z)-eicosatetraenoyl-CoA = 1-octadecanoyl-2-(5Z,8Z,11Z,14Z-eicosatetraenoyl)-sn-glycero-3-phosphate + CoA. The enzyme catalyses 1-(9Z-octadecenoyl)-sn-glycero-3-phosphate + hexadecanoyl-CoA = 1-hexadecanoyl-2-(9Z-octadecenoyl)-sn-glycero-3-phosphate + CoA. It catalyses the reaction 1-O-(9Z-octadecenyl)-sn-glycero-3-phosphate + (5Z,8Z,11Z,14Z)-eicosatetraenoyl-CoA = 1-O-(9Z-octadecenyl)-2-(5Z,8Z,11Z,14Z-eicosatetraenoyl)-sn-glycero-3-phosphate + CoA. The catalysed reaction is a 1-acyl-sn-glycero-3-phospho-(1D-myo-inositol) + (5Z,8Z,11Z,14Z)-eicosatetraenoyl-CoA = a 1-acyl-2-(5Z,8Z,11Z,14Z-eicosatetraenoyl)-sn-glycero-3-phospho-(1D-myo-inositol) + CoA. The protein operates within phospholipid metabolism; CDP-diacylglycerol biosynthesis; CDP-diacylglycerol from sn-glycerol 3-phosphate: step 2/3. Converts 1-acyl-sn-glycerol-3-phosphate (lysophosphatidic acid or LPA) into 1,2-diacyl-sn-glycerol-3-phosphate (phosphatidic acid or PA) by incorporating an acyl moiety at the sn-2 position of the glycerol backbone. Acts on LPA containing saturated or unsaturated fatty acids C16:0-C20:4 at the sn-1 position using C18:1, C20:4 or C18:2-CoA as the acyl donor. Also acts on lysophosphatidylcholine, lysophosphatidylinositol and lysophosphatidylserine using C18:1 or C20:4-CoA. Has a preference for arachidonoyl-CoA as a donor. Also has a modest lysophosphatidylinositol acyltransferase (LPIAT) activity, converts lysophosphatidylinositol (LPI) into phosphatidylinositol. This is 1-acyl-sn-glycerol-3-phosphate acyltransferase gamma (AGPAT3) from Pongo abelii (Sumatran orangutan).